The chain runs to 313 residues: Acetaldehyde dehydrogenase 3 (313 aa).

13–16 (SGNI) lines the NAD(+) pocket. Cys-133 (acyl-thioester intermediate) is an active-site residue. NAD(+)-binding positions include 164–172 (SAGPGTRAN) and Asn-291.

The protein belongs to the acetaldehyde dehydrogenase family.

It carries out the reaction acetaldehyde + NAD(+) + CoA = acetyl-CoA + NADH + H(+). The polypeptide is Acetaldehyde dehydrogenase 3 (Paraburkholderia xenovorans (strain LB400)).